The chain runs to 252 residues: Imidazole glycerol phosphate synthase subunit HisF (252 aa).

Catalysis depends on residues D11 and D130.

The protein belongs to the HisA/HisF family. As to quaternary structure, heterodimer of HisH and HisF.

It localises to the cytoplasm. It catalyses the reaction 5-[(5-phospho-1-deoxy-D-ribulos-1-ylimino)methylamino]-1-(5-phospho-beta-D-ribosyl)imidazole-4-carboxamide + L-glutamine = D-erythro-1-(imidazol-4-yl)glycerol 3-phosphate + 5-amino-1-(5-phospho-beta-D-ribosyl)imidazole-4-carboxamide + L-glutamate + H(+). The protein operates within amino-acid biosynthesis; L-histidine biosynthesis; L-histidine from 5-phospho-alpha-D-ribose 1-diphosphate: step 5/9. In terms of biological role, IGPS catalyzes the conversion of PRFAR and glutamine to IGP, AICAR and glutamate. The HisF subunit catalyzes the cyclization activity that produces IGP and AICAR from PRFAR using the ammonia provided by the HisH subunit. The polypeptide is Imidazole glycerol phosphate synthase subunit HisF (Geobacillus sp. (strain WCH70)).